We begin with the raw amino-acid sequence, 484 residues long: Glutamate--tRNA ligase (484 aa).

Positions 11–21 match the 'HIGH' region motif; it reads PSPTGYLHIGN. The short motif at 252 to 256 is the 'KMSKS' region element; it reads KLSKR. ATP is bound at residue Lys-255.

This sequence belongs to the class-I aminoacyl-tRNA synthetase family. Glutamate--tRNA ligase type 1 subfamily. In terms of assembly, monomer.

It localises to the cytoplasm. It catalyses the reaction tRNA(Glu) + L-glutamate + ATP = L-glutamyl-tRNA(Glu) + AMP + diphosphate. Its function is as follows. Catalyzes the attachment of glutamate to tRNA(Glu) in a two-step reaction: glutamate is first activated by ATP to form Glu-AMP and then transferred to the acceptor end of tRNA(Glu). This chain is Glutamate--tRNA ligase, found in Staphylococcus saprophyticus subsp. saprophyticus (strain ATCC 15305 / DSM 20229 / NCIMB 8711 / NCTC 7292 / S-41).